A 700-amino-acid chain; its full sequence is Chondroitinase-AC (700 aa).

The first 22 residues, 1–22 (MKKLFVTCIVFFSILSPALLIA), serve as a signal peptide directing secretion. Catalysis depends on residues histidine 225, tyrosine 234, and arginine 288. Serine 328 carries O-linked (Man...) serine glycosylation. Positions 405, 407, 416, and 417 each coordinate Ca(2+). O-linked (Man...) serine glycosylation occurs at serine 455.

This sequence belongs to the polysaccharide lyase 8 family. In terms of assembly, monomer. Ca(2+) is required as a cofactor.

The catalysed reaction is Eliminative degradation of polysaccharides containing 1,4-beta-D-hexosaminyl and 1,3-beta-D-glucuronosyl linkages to disaccharides containing 4-deoxy-beta-D-gluc-4-enuronosyl groups.. In Pedobacter heparinus (strain ATCC 13125 / DSM 2366 / CIP 104194 / JCM 7457 / NBRC 12017 / NCIMB 9290 / NRRL B-14731 / HIM 762-3), this protein is Chondroitinase-AC (cslA).